Reading from the N-terminus, the 489-residue chain is Betaine aldehyde dehydrogenase (489 aa).

K(+) is bound by residues Thr26 and Asp93. An NAD(+)-binding site is contributed by 150-152 (GAW). Lys162 serves as the catalytic Charge relay system. 176–179 (KPSE) provides a ligand contact to NAD(+). Residue Val180 participates in K(+) binding. An NAD(+)-binding site is contributed by 229–232 (GVET). Leu245 serves as a coordination point for K(+). Glu251 acts as the Proton acceptor in catalysis. NAD(+) is bound by residues Gly253, Cys285, and Glu386. The active-site Nucleophile is the Cys285. Position 285 is a cysteine sulfenic acid (-SOH) (Cys285). 2 residues coordinate K(+): Lys456 and Gly459. Glu463 (charge relay system) is an active-site residue.

It belongs to the aldehyde dehydrogenase family. As to quaternary structure, dimer of dimers. K(+) serves as cofactor.

The catalysed reaction is betaine aldehyde + NAD(+) + H2O = glycine betaine + NADH + 2 H(+). It participates in amine and polyamine biosynthesis; betaine biosynthesis via choline pathway; betaine from betaine aldehyde: step 1/1. Its function is as follows. Involved in the biosynthesis of the osmoprotectant glycine betaine. Catalyzes the irreversible oxidation of betaine aldehyde to the corresponding acid. The sequence is that of Betaine aldehyde dehydrogenase from Burkholderia ambifaria (strain MC40-6).